Consider the following 257-residue polypeptide: MLSKRIIPCLDVKDGVVVKGVQFRNHEVMGGIVELARRYAEEGADELVFYDITASSDARVVDKSWVSRVAEVIDIPFCVAGGIKSVEDARQILEFGADKVSINSPALADPGLITRLAERFGVQCVVVGIDSYFDADTGHYQVKQFTGDESRTRTTAWHTLDWVQEAQKRGAGEIVLNVMNQDGMRQGYDLEQLKLVRAVCKVPLIASGGAGAMEHFRDAFTLADVDGALAASVFHKGLIPIPELKRWLKNEGVAIRE.

Active-site residues include D11 and D130.

The protein belongs to the HisA/HisF family. In terms of assembly, heterodimer of HisH and HisF.

It is found in the cytoplasm. The catalysed reaction is 5-[(5-phospho-1-deoxy-D-ribulos-1-ylimino)methylamino]-1-(5-phospho-beta-D-ribosyl)imidazole-4-carboxamide + L-glutamine = D-erythro-1-(imidazol-4-yl)glycerol 3-phosphate + 5-amino-1-(5-phospho-beta-D-ribosyl)imidazole-4-carboxamide + L-glutamate + H(+). It participates in amino-acid biosynthesis; L-histidine biosynthesis; L-histidine from 5-phospho-alpha-D-ribose 1-diphosphate: step 5/9. IGPS catalyzes the conversion of PRFAR and glutamine to IGP, AICAR and glutamate. The HisF subunit catalyzes the cyclization activity that produces IGP and AICAR from PRFAR using the ammonia provided by the HisH subunit. This chain is Imidazole glycerol phosphate synthase subunit HisF, found in Aeromonas salmonicida (strain A449).